Consider the following 159-residue polypeptide: MPRKALKPKEKRGLPEPDSKFGSVQIARFISKLNFEGKKSIAESIMYGSFDIIKERTGEDPVSVFNRALENIRPLLEVRPRRVGGATYQVPMEVPVIRSTTLAINWLIGIARSKTGKPMREKLAQEIIDASKKEGAAVKKREDTHKMAEANKAFAHYRW.

Belongs to the universal ribosomal protein uS7 family. As to quaternary structure, part of the 30S ribosomal subunit. Contacts proteins S9 and S11.

Its function is as follows. One of the primary rRNA binding proteins, it binds directly to 16S rRNA where it nucleates assembly of the head domain of the 30S subunit. Is located at the subunit interface close to the decoding center, probably blocks exit of the E-site tRNA. The polypeptide is Small ribosomal subunit protein uS7 (Endomicrobium trichonymphae).